The chain runs to 233 residues: Pyridoxal 5'-phosphate synthase subunit PdxT (233 aa).

G61–S63 lines the L-glutamine pocket. The active-site Nucleophile is the C93. L-glutamine-binding positions include R127 and I163–R164. Residues H212 and E214 each act as charge relay system in the active site.

This sequence belongs to the glutaminase PdxT/SNO family. As to quaternary structure, in the presence of PdxS, forms a dodecamer of heterodimers. Only shows activity in the heterodimer.

The catalysed reaction is aldehydo-D-ribose 5-phosphate + D-glyceraldehyde 3-phosphate + L-glutamine = pyridoxal 5'-phosphate + L-glutamate + phosphate + 3 H2O + H(+). It catalyses the reaction L-glutamine + H2O = L-glutamate + NH4(+). It functions in the pathway cofactor biosynthesis; pyridoxal 5'-phosphate biosynthesis. Catalyzes the hydrolysis of glutamine to glutamate and ammonia as part of the biosynthesis of pyridoxal 5'-phosphate. The resulting ammonia molecule is channeled to the active site of PdxS. In Paenarthrobacter aurescens (strain TC1), this protein is Pyridoxal 5'-phosphate synthase subunit PdxT.